We begin with the raw amino-acid sequence, 501 residues long: Aldehyde dehydrogenase, cytosolic 1 (501 aa).

N-acetylserine is present on S2. N6-acetyllysine is present on residues K91 and K128. G246 to G251 lines the NAD(+) pocket. Position 252 is an N6-acetyllysine (K252). E269 functions as the Proton acceptor in the catalytic mechanism. The active-site Nucleophile is the C303. Residues K353, K367, and K410 each carry the N6-acetyllysine modification. Phosphoserine is present on S413. N6-acetyllysine occurs at positions 419 and 435.

Belongs to the aldehyde dehydrogenase family. Homotetramer. In terms of tissue distribution, highest level in liver, high level in lung, low level in kidney and testis.

It localises to the cytoplasm. It carries out the reaction an aldehyde + NAD(+) + H2O = a carboxylate + NADH + 2 H(+). Its pathway is alcohol metabolism; ethanol degradation; acetate from ethanol: step 2/2. Functionally, can oxidize benzaldehyde, propionaldehyde and acetaldehyde. No detectable activity with retinal. The polypeptide is Aldehyde dehydrogenase, cytosolic 1 (Mus musculus (Mouse)).